The following is a 316-amino-acid chain: Ninja-family protein 2 (316 aa).

Disordered stretches follow at residues 1–29 (MASR…GEPD) and 72–236 (TSDD…TSTG). Positions 99–108 (ERWRRREMQS) are enriched in basic and acidic residues. The span at 156–166 (DQGNTSSSMPE) shows a compositional bias: polar residues. Composition is skewed to low complexity over residues 179 to 199 (SSME…QNKS) and 222 to 235 (LRTL…TTST).

This sequence belongs to the Ninja family.

It localises to the nucleus. The chain is Ninja-family protein 2 (AFP-B1) from Triticum aestivum (Wheat).